A 1795-amino-acid polypeptide reads, in one-letter code: Putative surface cell antigen sca2 (1795 aa).

A signal peptide spans 1 to 33; sequence MNLQNSHSKKYVLTFFMSTCLLTSSFLSTSARA. Polar residues predominate over residues 360–373; it reads FLNNNDTTKPSTGR. Disordered stretches follow at residues 360 to 391, 664 to 709, and 1354 to 1441; these read FLNNNDTTKPSTGRSQKKSGSKNDHWYMSNQS, LEQT…SSNS, and KQEN…DEEL. Residues 672 to 700 show a composition bias toward pro residues; it reads PNPPPLPLNGGIPNPPPLPLNGSMPPPPL. Basic and acidic residues-rich tracts occupy residues 1364-1383 and 1398-1409; these read SSTKDDTQPEDSNKKSEQSD and SKNDKSSDDKKS. Over residues 1417-1432 the composition is skewed to acidic residues; it reads DEDDTGYATDEEELEE. Residues 1516–1795 enclose the Autotransporter domain; that stretch reads ETSINRGVWI…QGLIKLKVNL (280 aa).

Its subcellular location is the cell outer membrane. This Rickettsia conorii (strain ATCC VR-613 / Malish 7) protein is Putative surface cell antigen sca2 (sca2).